The chain runs to 304 residues: Elongation factor Ts (304 aa).

Positions 79–82 (TDFV) are involved in Mg(2+) ion dislocation from EF-Tu.

It belongs to the EF-Ts family.

It localises to the cytoplasm. In terms of biological role, associates with the EF-Tu.GDP complex and induces the exchange of GDP to GTP. It remains bound to the aminoacyl-tRNA.EF-Tu.GTP complex up to the GTP hydrolysis stage on the ribosome. This is Elongation factor Ts from Polaromonas sp. (strain JS666 / ATCC BAA-500).